The chain runs to 127 residues: MGFWKLSPFLAIGLLVMYQAGILQAAPFRSALENPLESATLTEDEICVLLTAVVKDYVQMKARELQQEQETEGSSLTAQKSSCKDGPCVTNRLEGWLARAERMVKNTFMPTDVDPEAFGHQHKELAA.

The first 25 residues, 1–25 (MGFWKLSPFLAIGLLVMYQAGILQA), serve as a signal peptide directing secretion. The propeptide occupies 26 to 81 (APFRSALENPLESATLTEDEICVLLTAVVKDYVQMKARELQQEQETEGSSLTAQKS). The disordered stretch occupies residues 65-85 (LQQEQETEGSSLTAQKSSCKD). Positions 72 to 81 (EGSSLTAQKS) are enriched in polar residues. A disulfide bridge links cysteine 83 with cysteine 88.

This sequence belongs to the calcitonin family.

It is found in the secreted. This chain is Calcitonin receptor-stimulating peptide 2 (CRSP2), found in Canis lupus familiaris (Dog).